The primary structure comprises 93 residues: DNA-binding protein Fis (93 aa).

The H-T-H motif DNA-binding region spans 74-93 (QTRAAQMMGINRGTLRKKLK).

Belongs to the transcriptional regulatory Fis family. Homodimer.

Activates ribosomal RNA transcription. Plays a direct role in upstream activation of rRNA promoters. This is DNA-binding protein Fis from Proteus vulgaris.